Consider the following 215-residue polypeptide: Deoxyadenosine kinase (215 aa).

Residue 9 to 17 (GPIGAGKSS) participates in ATP binding. Substrate contacts are provided by Glu-33, Tyr-45, and Asn-56. The Proton acceptor role is filled by Asp-79. Substrate-binding residues include Arg-80, Asp-85, and Glu-150.

The protein belongs to the DCK/DGK family. In terms of assembly, heterodimer of a deoxyadenosine (DAK) and a deoxyguanosine kinase (DGK).

The enzyme catalyses 2'-deoxyadenosine + ATP = dAMP + ADP + H(+). In terms of biological role, DGK/DAK plays an essential role in generating the deoxyribonucleotide precursors, dGTP and dATP, for DNA metabolism. The chain is Deoxyadenosine kinase from Lactobacillus acidophilus (strain ATCC 700396 / NCK56 / N2 / NCFM).